Reading from the N-terminus, the 460-residue chain is Probable elastin-binding protein EbpS (460 aa).

The segment covering 1–40 has biased composition (basic and acidic residues); that stretch reads MSNNNFKDDFEKNRQSINPDEHQTELKEDDKTNENKKEAD. The interval 1–277 is disordered; that stretch reads MSNNNFKDDF…NQYNDQSEGK (277 aa). The segment covering 41–57 has biased composition (low complexity); it reads SQNSLSNNSNQQFPPRN. Residues 74–128 show a composition bias toward basic and acidic residues; the sequence is QQDDKHQKNSDAKTTEGSLDDRYDEAQLQQQHDKSQQQNKTEKQSQDNRMKDGKD. Low complexity predominate over residues 177–192; the sequence is ATGAGIAGAAGVAGAA. The span at 203–226 shows a compositional bias: basic and acidic residues; it reads DKQDSKHSNHENDEKSVKNDDQKQ. Low complexity predominate over residues 264-273; the sequence is SNQNNQYNDQ. A helical membrane pass occupies residues 285 to 305; that stretch reads ILLPLIAAILILGAIAIFGGM. Over residues 313–359 the composition is skewed to basic and acidic residues; sequence SKSDDQKIANQSKKDSDKKDGAQSEDNKDKKSDSNKDKKSDSDKNAD. The disordered stretch occupies residues 313-411; it reads SKSDDQKIAN…NQQATQGQQS (99 aa). Low complexity predominate over residues 364–411; sequence NSSSNPNATSTNNNDNVANNNSNYTNQNQQDNANQNSNNQQATQGQQS. The LysM domain occupies 410-458; sequence QSHTVYGQENLYRIAIQYYGEGTQANVDKIKRANGLSSNNIHNGQTLVI.

The protein localises to the cell membrane. The polypeptide is Probable elastin-binding protein EbpS (ebpS) (Staphylococcus epidermidis (strain ATCC 35984 / DSM 28319 / BCRC 17069 / CCUG 31568 / BM 3577 / RP62A)).